Reading from the N-terminus, the 244-residue chain is MGNKINPTGLRLGITQEHRSKWFATSKTYPILLQEDYKIRNFIQKKYSSAGISDVLIARKADQLELELKTARPGVIVGRQGSGIEELRSGIQKTIGDRTRQVRINVVEVERVDADAYLLAEYIAQQLEKRVAFRRTIRMALQRAQRAGVLGLKIQVGGRLNGAEIARSEWTREGRVPLHTLRAEVDYALREANTTYGVLGIKVWVFKGEVLPKEEQTIPVGAIPRRKGSRKPQQFEDRSSNENS.

A KH type-2 domain is found at 39 to 110 (IRNFIQKKYS…QVRINVVEVE (72 aa)). The disordered stretch occupies residues 221-244 (GAIPRRKGSRKPQQFEDRSSNENS). A compositionally biased stretch (basic and acidic residues) spans 233 to 244 (QQFEDRSSNENS).

It belongs to the universal ribosomal protein uS3 family. Part of the 30S ribosomal subunit. Forms a tight complex with proteins S10 and S14.

Functionally, binds the lower part of the 30S subunit head. Binds mRNA in the 70S ribosome, positioning it for translation. In Prochlorococcus marinus (strain MIT 9515), this protein is Small ribosomal subunit protein uS3.